A 546-amino-acid polypeptide reads, in one-letter code: Chaperonin GroEL (546 aa).

ATP contacts are provided by residues 30–33 (TLGP), Lys51, 87–91 (DGTTT), Gly415, 479–481 (NAA), and Asp495. The disordered stretch occupies residues 526–546 (KEDAPMPGGMPGGMGGMGMDM). Gly residues predominate over residues 534 to 546 (GMPGGMGGMGMDM).

The protein belongs to the chaperonin (HSP60) family. Forms a cylinder of 14 subunits composed of two heptameric rings stacked back-to-back. Interacts with the co-chaperonin GroES.

It is found in the cytoplasm. The enzyme catalyses ATP + H2O + a folded polypeptide = ADP + phosphate + an unfolded polypeptide.. In terms of biological role, together with its co-chaperonin GroES, plays an essential role in assisting protein folding. The GroEL-GroES system forms a nano-cage that allows encapsulation of the non-native substrate proteins and provides a physical environment optimized to promote and accelerate protein folding. This chain is Chaperonin GroEL, found in Burkholderia thailandensis.